The sequence spans 484 residues: Magnesium transporter MRS2-3 (484 aa).

Disordered stretches follow at residues 1–40 (MRGA…GRKK) and 141–186 (TKPQ…QSLE). A compositionally biased stretch (polar residues) spans 10–24 (NFSTNPSTPNTGQPT). The stretch at 203-275 (ACLEAASSSL…LLDDDEDMAE (73 aa)) forms a coiled coil. A disordered region spans residues 286–320 (LEDSSNSSMNESDTFEVDLPQGDEDDRLPPEFASE). Over residues 298-311 (DTFEVDLPQGDEDD) the composition is skewed to acidic residues. A helical membrane pass occupies residues 416-436 (GVMLTTATLVMSAFIAVAGVF). A Required for magnesium transport activity motif is present at residues 437–439 (GMN). A helical membrane pass occupies residues 455–475 (FIWTVIGGSIGSICLYVGAIG).

Belongs to the CorA metal ion transporter (MIT) (TC 1.A.35.5) family. Expressed in the whole plant.

It localises to the membrane. Magnesium transporter that may mediate the influx of magnesium. The polypeptide is Magnesium transporter MRS2-3 (MRS2-3) (Arabidopsis thaliana (Mouse-ear cress)).